Here is a 29-residue protein sequence, read N- to C-terminus: GSAFCGETCVLGTCYTPDCSCTALVCLKN.

Residues 1-29 (GSAFCGETCVLGTCYTPDCSCTALVCLKN) constitute a cross-link (cyclopeptide (Gly-Asn)). 3 cysteine pairs are disulfide-bonded: Cys-5/Cys-19, Cys-9/Cys-21, and Cys-14/Cys-26.

Post-translationally, this is a cyclic peptide.

It localises to the secreted. In terms of biological role, probably participates in a plant defense mechanism. The sequence is that of Cyclotide cter-N from Clitoria ternatea (Butterfly pea).